The chain runs to 37 residues: Large ribosomal subunit protein bL36c (37 aa).

It belongs to the bacterial ribosomal protein bL36 family.

It localises to the plastid. Its subcellular location is the chloroplast. The sequence is that of Large ribosomal subunit protein bL36c from Tetradesmus obliquus (Green alga).